Here is a 956-residue protein sequence, read N- to C-terminus: F-box only protein 10 (956 aa).

Positions 1–48 constitute an F-box domain; sequence MEAGGLPLELWRMILAYLHLPDLGRCSLVCRAWYELILSLDSTRWRQL. 2 PbH1 repeats span residues 198–217 and 238–260; these read SGHVQFDNCNFENGHIQVHG and VPLCVLENCEFVGSENNSVTVEG. The tract at residues 314–367 is disordered; the sequence is EGSQSPTSPASSSPKPGSKAGSQEAEVGSDGERVAQTPDSSDGGLSPSGEDEDE. 2 stretches are compositionally biased toward low complexity: residues 316–336 and 351–361; these read SQSPTSPASSSPKPGSKAGSQ and PDSSDGGLSPS. 2 positions are modified to phosphoserine: serine 321 and serine 326. 15 PbH1 repeats span residues 427-448, 449-470, 471-493, 494-516, 538-560, 561-583, 584-606, 607-629, 630-652, 653-675, 717-739, 740-762, 764-786, 787-809, and 832-854; these read VQGCLIRKCLFRDGKGGVFVCS, HGRAKMEGNIFRNLTYAVRCIH, NSKIIMLRNDIYRCRASGIFLRL, EGGGLIAGNNIYHNAEAGVDIRK, LGNGKGIIRNNQIFSNKEAGIYI, LYHGNPVVSGNHIFKGRAAGIAV, NENGKGLITENVIRENQWGGVDI, RRGGIPVLRSNLICFGYSDGVVV, GDEGKGLIEGNTIYANKGCGVWM, MSSSLPHVTSNHVSYNGLYGVAV, RPITIALVESNSINHNGASGLYV, QSSEALHVITNVIHANGDRGITV, QSSQPTRVANNSISCNRQSGVKV, EAQCKVELRGNGIYDNRGHGIIT, and LPRSDTKVIKNRIHSFRAYGIAV.

As to quaternary structure, component of the SCF(FBXO10) complex consisting of CUL1, SKP1 and FBXO10. Interacts with BCL2. Interacts with PRDM1.

Its subcellular location is the cytoplasm. It functions in the pathway protein modification; protein ubiquitination. Substrate-recognition component of the SCF (SKP1-CUL1-F-box protein)-type E3 ubiquitin ligase complex. Mediates the ubiquitination and degradation of BCL2, an antiapoptotic protein, thereby playing a role in apoptosis by controlling the stability of BCL2. Targets also the receptor for advanced glycation end products RAGE for ubiquitination and subsequent lysosomal degradation. Directly controls HGAL/GCSAM ubiquitination and degradation and thereby decreases BCR signaling. This Homo sapiens (Human) protein is F-box only protein 10 (FBXO10).